Consider the following 228-residue polypeptide: ATP synthase F(0) complex subunit a (228 aa).

6 helical membrane-spanning segments follow: residues 13–33 (YFLG…TMFI), 70–90 (WALL…TGLL), 100–120 (LSLN…MGAT), 140–160 (APFL…ALGV), 162–182 (LTAN…ALIN), and 190–210 (LFLT…VSFI).

Belongs to the ATPase A chain family. Component of the ATP synthase complex composed at least of ATP5F1A/subunit alpha, ATP5F1B/subunit beta, ATP5MC1/subunit c (homooctomer), MT-ATP6/subunit a, MT-ATP8/subunit 8, ATP5ME/subunit e, ATP5MF/subunit f, ATP5MG/subunit g, ATP5MK/subunit k, ATP5MJ/subunit j, ATP5F1C/subunit gamma, ATP5F1D/subunit delta, ATP5F1E/subunit epsilon, ATP5PF/subunit F6, ATP5PB/subunit b, ATP5PD/subunit d, ATP5PO/subunit OSCP. ATP synthase complex consists of a soluble F(1) head domain (subunits alpha(3) and beta(3)) - the catalytic core - and a membrane F(0) domain - the membrane proton channel (subunits c, a, 8, e, f, g, k and j). These two domains are linked by a central stalk (subunits gamma, delta, and epsilon) rotating inside the F1 region and a stationary peripheral stalk (subunits F6, b, d, and OSCP). Interacts with DNAJC30; interaction is direct.

The protein localises to the mitochondrion inner membrane. It carries out the reaction H(+)(in) = H(+)(out). Subunit a, of the mitochondrial membrane ATP synthase complex (F(1)F(0) ATP synthase or Complex V) that produces ATP from ADP in the presence of a proton gradient across the membrane which is generated by electron transport complexes of the respiratory chain. ATP synthase complex consist of a soluble F(1) head domain - the catalytic core - and a membrane F(1) domain - the membrane proton channel. These two domains are linked by a central stalk rotating inside the F(1) region and a stationary peripheral stalk. During catalysis, ATP synthesis in the catalytic domain of F(1) is coupled via a rotary mechanism of the central stalk subunits to proton translocation. With the subunit c (ATP5MC1), forms the proton-conducting channel in the F(0) domain, that contains two crucial half-channels (inlet and outlet) that facilitate proton movement from the mitochondrial intermembrane space (IMS) into the matrix. Protons are taken up via the inlet half-channel and released through the outlet half-channel, following a Grotthuss mechanism. The sequence is that of ATP synthase F(0) complex subunit a from Myxine glutinosa (Atlantic hagfish).